The chain runs to 506 residues: RNA2 polyprotein (506 aa).

The protein belongs to the nepoviruses RNA2 polyprotein family. Post-translationally, specific enzymatic cleavages in vivo by the P1 encoded 3C-like protease yield mature proteins.

It is found in the host cell junction. The protein resides in the host plasmodesma. The protein localises to the virion. Its function is as follows. The movement protein is assembled into tubules that allow the transport of virions from cell to cell. In Beta vulgaris subsp. vulgaris (Beet), this protein is RNA2 polyprotein.